A 139-amino-acid polypeptide reads, in one-letter code: Holo-[acyl-carrier-protein] synthase (139 aa).

Mg(2+)-binding residues include aspartate 8 and glutamate 57.

It belongs to the P-Pant transferase superfamily. AcpS family. Requires Mg(2+) as cofactor.

The protein resides in the cytoplasm. It carries out the reaction apo-[ACP] + CoA = holo-[ACP] + adenosine 3',5'-bisphosphate + H(+). Its function is as follows. Transfers the 4'-phosphopantetheine moiety from coenzyme A to a Ser of acyl-carrier-protein. The polypeptide is Holo-[acyl-carrier-protein] synthase (Dinoroseobacter shibae (strain DSM 16493 / NCIMB 14021 / DFL 12)).